The primary structure comprises 220 residues: Probable septum site-determining protein MinC (220 aa).

The protein belongs to the MinC family. In terms of assembly, interacts with MinD and FtsZ.

Cell division inhibitor that blocks the formation of polar Z ring septums. Rapidly oscillates between the poles of the cell to destabilize FtsZ filaments that have formed before they mature into polar Z rings. Prevents FtsZ polymerization. The protein is Probable septum site-determining protein MinC of Prochlorococcus marinus subsp. pastoris (strain CCMP1986 / NIES-2087 / MED4).